The primary structure comprises 217 residues: Probable transaldolase (217 aa).

The active-site Schiff-base intermediate with substrate is the Lys-83.

The protein belongs to the transaldolase family. Type 3B subfamily.

The protein resides in the cytoplasm. The enzyme catalyses D-sedoheptulose 7-phosphate + D-glyceraldehyde 3-phosphate = D-erythrose 4-phosphate + beta-D-fructose 6-phosphate. It functions in the pathway carbohydrate degradation; pentose phosphate pathway; D-glyceraldehyde 3-phosphate and beta-D-fructose 6-phosphate from D-ribose 5-phosphate and D-xylulose 5-phosphate (non-oxidative stage): step 2/3. In terms of biological role, transaldolase is important for the balance of metabolites in the pentose-phosphate pathway. This chain is Probable transaldolase, found in Rhizobium meliloti (strain 1021) (Ensifer meliloti).